Consider the following 201-residue polypeptide: FMN-dependent NADH:quinone oxidoreductase (201 aa).

FMN is bound by residues Ser10, Ser16–Ser18, Met96–Phe99, and Ser140–Gly143.

The protein belongs to the azoreductase type 1 family. Homodimer. Requires FMN as cofactor.

The catalysed reaction is 2 a quinone + NADH + H(+) = 2 a 1,4-benzosemiquinone + NAD(+). It carries out the reaction N,N-dimethyl-1,4-phenylenediamine + anthranilate + 2 NAD(+) = 2-(4-dimethylaminophenyl)diazenylbenzoate + 2 NADH + 2 H(+). Quinone reductase that provides resistance to thiol-specific stress caused by electrophilic quinones. In terms of biological role, also exhibits azoreductase activity. Catalyzes the reductive cleavage of the azo bond in aromatic azo compounds to the corresponding amines. This chain is FMN-dependent NADH:quinone oxidoreductase, found in Escherichia coli O9:H4 (strain HS).